We begin with the raw amino-acid sequence, 244 residues long: Sperm-egg fusion protein Juno (244 aa).

The signal sequence occupies residues 1–19 (MAQWWQILLGLWAVLPTLA). 8 disulfide bridges follow: cysteine 27/cysteine 55, cysteine 47/cysteine 95, cysteine 56/cysteine 99, cysteine 79/cysteine 166, cysteine 86/cysteine 137, cysteine 126/cysteine 200, cysteine 130/cysteine 180, and cysteine 143/cysteine 160. Residues 62-81 (WEAHLEEPLLFNFSMMHCGL) form an important for interaction with IZUMO1 region. N-linked (GlcNAc...) asparagine glycosylation occurs at asparagine 73. N-linked (GlcNAc...) asparagine glycosylation occurs at asparagine 185. Glycine 222 carries the GPI-anchor amidated glycine lipid modification. A propeptide spanning residues 223–244 (SALAPQLSYTLPAFSLCLLFHP) is cleaved from the precursor.

The protein belongs to the folate receptor family. As to quaternary structure, monomer. Interacts with IZUMO1; the interaction is direct. IZUMO1 and IZUMO1R/JUNO form a complex with 1:1 stoichiometry. Interacts with WDR54. Post-translationally, the protein is rapidly cleaved following fertilization, being only weakly detectable in zona-intact fertilized eggs at telophase II and undetectable at the pronuclear stage. Sheding is probably required to block to polyspermy and ensuring egg fusion with a single sperm. Widely expressed with higher expression in thymus, spleen and lung. Present at the cell surface of unfertilized oocytes, while it is barely detectable 30 to 40 minutes after fertilization (at protein level).

It is found in the cell membrane. Its function is as follows. Receptor for IZUMO1 present at the cell surface of oocytes (oolemma), which is essential for species-specific gamete recognition and fertilization. The IZUMO1:IZUMO1R/JUNO interaction is a necessary adhesion event between sperm and egg that is required for fertilization but is not sufficient for cell fusion. The ligand-receptor interaction probably does not act as a membrane 'fusogen'. Does not bind folate. This Mus musculus (Mouse) protein is Sperm-egg fusion protein Juno.